The sequence spans 206 residues: Large ribosomal subunit protein uL4 (206 aa).

A disordered region spans residues 43–94; that stretch reads ARSGNRAQKDREQVKHTTKKPWRQKGTGRARAGMSSSPLWRGGGRIFPNSPE. A compositionally biased stretch (basic residues) spans 58 to 70; the sequence is HTTKKPWRQKGTG.

This sequence belongs to the universal ribosomal protein uL4 family. As to quaternary structure, part of the 50S ribosomal subunit.

Functionally, one of the primary rRNA binding proteins, this protein initially binds near the 5'-end of the 23S rRNA. It is important during the early stages of 50S assembly. It makes multiple contacts with different domains of the 23S rRNA in the assembled 50S subunit and ribosome. Its function is as follows. Forms part of the polypeptide exit tunnel. The sequence is that of Large ribosomal subunit protein uL4 from Polynucleobacter asymbioticus (strain DSM 18221 / CIP 109841 / QLW-P1DMWA-1) (Polynucleobacter necessarius subsp. asymbioticus).